The chain runs to 362 residues: Putative RING-H2 finger protein ATL21B (362 aa).

An N-terminal signal peptide occupies residues 1–23; the sequence is MIISKQLFLLFFLLFFIFPLRHA. Residues 234–254 traverse the membrane as a helical segment; that stretch reads VVAVLICLSIIGAVILFVTCI. The segment at 316-358 adopts an RING-type; atypical zinc-finger fold; it reads CPICLSEYVSKETVRFIPECDHCFHAKCIDVWLKIHGSCPLCR.

This sequence belongs to the RING-type zinc finger family. ATL subfamily.

It is found in the membrane. The catalysed reaction is S-ubiquitinyl-[E2 ubiquitin-conjugating enzyme]-L-cysteine + [acceptor protein]-L-lysine = [E2 ubiquitin-conjugating enzyme]-L-cysteine + N(6)-ubiquitinyl-[acceptor protein]-L-lysine.. It participates in protein modification; protein ubiquitination. In Arabidopsis thaliana (Mouse-ear cress), this protein is Putative RING-H2 finger protein ATL21B (ATL21B).